Reading from the N-terminus, the 188-residue chain is Protein GrpE 2 (188 aa).

It belongs to the GrpE family. In terms of assembly, homodimer.

The protein localises to the cytoplasm. In terms of biological role, participates actively in the response to hyperosmotic and heat shock by preventing the aggregation of stress-denatured proteins, in association with DnaK and GrpE. It is the nucleotide exchange factor for DnaK and may function as a thermosensor. Unfolded proteins bind initially to DnaJ; upon interaction with the DnaJ-bound protein, DnaK hydrolyzes its bound ATP, resulting in the formation of a stable complex. GrpE releases ADP from DnaK; ATP binding to DnaK triggers the release of the substrate protein, thus completing the reaction cycle. Several rounds of ATP-dependent interactions between DnaJ, DnaK and GrpE are required for fully efficient folding. This is Protein GrpE 2 from Buchnera aphidicola subsp. Acyrthosiphon pisum (strain APS) (Acyrthosiphon pisum symbiotic bacterium).